Reading from the N-terminus, the 108-residue chain is UPF0145 protein alr2488 (108 aa).

This sequence belongs to the UPF0145 family.

In Nostoc sp. (strain PCC 7120 / SAG 25.82 / UTEX 2576), this protein is UPF0145 protein alr2488.